The chain runs to 455 residues: Fumarate hydratase class II (455 aa).

Residues 96–98 (SGT), 122–125 (HPND), 132–134 (SSN), and T180 each bind substrate. Residue H181 is the Proton donor/acceptor of the active site. Residue S311 is part of the active site. Residues S312 and 317–319 (KVN) each bind substrate.

The protein belongs to the class-II fumarase/aspartase family. Fumarase subfamily. In terms of assembly, homotetramer.

It is found in the cytoplasm. It carries out the reaction (S)-malate = fumarate + H2O. The protein operates within carbohydrate metabolism; tricarboxylic acid cycle; (S)-malate from fumarate: step 1/1. In terms of biological role, involved in the TCA cycle. Catalyzes the stereospecific interconversion of fumarate to L-malate. This is Fumarate hydratase class II from Listeria monocytogenes serovar 1/2a (strain ATCC BAA-679 / EGD-e).